Here is a 508-residue protein sequence, read N- to C-terminus: Cytochrome P450 4A12 (508 aa).

The next 2 helical transmembrane spans lie at 10–30 (IFPG…VLLL) and 120–140 (FLAP…WFQH). Glu319 is a heme binding site. Ser438 is modified (phosphoserine). Residue Cys455 coordinates heme.

This sequence belongs to the cytochrome P450 family. Heme serves as cofactor. Expressed at proximal straight tubules and preglomerular arteries of the outer medulla as well in the cortex regions of kidney (at protein level).

The protein localises to the endoplasmic reticulum membrane. It localises to the microsome membrane. It catalyses the reaction an organic molecule + reduced [NADPH--hemoprotein reductase] + O2 = an alcohol + oxidized [NADPH--hemoprotein reductase] + H2O + H(+). The catalysed reaction is dodecanoate + reduced [NADPH--hemoprotein reductase] + O2 = 12-hydroxydodecanoate + oxidized [NADPH--hemoprotein reductase] + H2O + H(+). The enzyme catalyses dodecanoate + reduced [NADPH--hemoprotein reductase] + O2 = (11R)-hydroxydodecanoate + oxidized [NADPH--hemoprotein reductase] + H2O + H(+). It carries out the reaction (5Z,8Z,11Z,14Z)-eicosatetraenoate + reduced [NADPH--hemoprotein reductase] + O2 = 20-hydroxy-(5Z,8Z,11Z,14Z)-eicosatetraenoate + oxidized [NADPH--hemoprotein reductase] + H2O + H(+). It catalyses the reaction prostaglandin A1 + reduced [NADPH--hemoprotein reductase] + O2 = 20-hydroxy prostaglandin A1 + oxidized [NADPH--hemoprotein reductase] + H2O + H(+). Its pathway is lipid metabolism; fatty acid metabolism. Its activity is regulated as follows. Activated by cytochrome b5 and phosphatidylserine. A cytochrome P450 monooxygenase involved in the metabolism of fatty acids. Catalyzes predominantly the oxidation of the terminal carbon (omega-oxidation) of saturated and unsaturated fatty acids. May act as a major omega-hydroxylase for dodecanoic (lauric) acid in kidney. At preglomerular arteries, may participate in omega-hydroxylation of (5Z,8Z,11Z,14Z)-eicosatetraenoic acid (arachidonate) to 20-hydroxyeicosatetraenoic acid (20-HETE), a signaling molecule acting both as vasoconstrictive and natriuretic with overall effect on arterial blood pressure. Can also catalyze the oxidation of the penultimate carbon (omega-1 oxidation) of fatty acids with lower efficiency, displaying a preference for the (R)-stereoisomer. Mechanistically, uses molecular oxygen inserting one oxygen atom into a substrate, and reducing the second into a water molecule, with two electrons provided by NADPH via cytochrome P450 reductase (NADPH--hemoprotein reductase). The polypeptide is Cytochrome P450 4A12 (Cyp4a12) (Rattus norvegicus (Rat)).